Reading from the N-terminus, the 178-residue chain is Ras-like protein (178 aa).

A GTP-binding site is contributed by 1 to 6; that stretch reads GGVGKS. The Effector region signature appears at 21-29; it reads YDPTIEDSY. GTP-binding positions include 46-50 and 105-108; these read DTAGQ and NKCD. The residue at position 175 (C175) is a Cysteine methyl ester. The S-geranylgeranyl cysteine moiety is linked to residue C175. Positions 176-178 are cleaved as a propeptide — removed in mature form; it reads SIL.

It belongs to the small GTPase superfamily. Ras family.

It localises to the cell membrane. It carries out the reaction GTP + H2O = GDP + phosphate + H(+). Its activity is regulated as follows. Alternates between an inactive form bound to GDP and an active form bound to GTP. Activated by a guanine nucleotide-exchange factor (GEF) and inactivated by a GTPase-activating protein (GAP). Functionally, ras proteins bind GDP/GTP and possess intrinsic GTPase activity. The sequence is that of Ras-like protein from Artemia salina (Brine shrimp).